The sequence spans 171 residues: Adenine phosphoribosyltransferase (171 aa).

The protein belongs to the purine/pyrimidine phosphoribosyltransferase family. As to quaternary structure, homodimer.

It localises to the cytoplasm. The catalysed reaction is AMP + diphosphate = 5-phospho-alpha-D-ribose 1-diphosphate + adenine. Its pathway is purine metabolism; AMP biosynthesis via salvage pathway; AMP from adenine: step 1/1. Catalyzes a salvage reaction resulting in the formation of AMP, that is energically less costly than de novo synthesis. This Pelotomaculum thermopropionicum (strain DSM 13744 / JCM 10971 / SI) protein is Adenine phosphoribosyltransferase.